The primary structure comprises 376 residues: Putative F-box only protein 9 (376 aa).

One can recognise an F-box domain in the interval 1–44 (MSDLPPDLVEDILSRVPATSLKRLRFTCKQWNSLFKNRRFTEKH).

The chain is Putative F-box only protein 9 (FBX9) from Arabidopsis thaliana (Mouse-ear cress).